The primary structure comprises 268 residues: Trypsin-like protease (268 aa).

The first 41 residues, 1–41 (MTHTTTIAAKRGGLALAKKAAAAGAVALAVASLQPVSAAHA), serve as a signal peptide directing secretion. Positions 42–45 (ADAR) are cleaved as a propeptide — activation peptide. One can recognise a Peptidase S1 domain in the interval 46–266 (VIGGKPAAQN…FAKDIAKAAS (221 aa)). Cysteine 67 and cysteine 83 are oxidised to a cystine. Residues histidine 82 and aspartate 127 each act as charge relay system in the active site. 2 cysteine pairs are disulfide-bonded: cysteine 187–cysteine 202 and cysteine 213–cysteine 242. The active-site Charge relay system is the serine 217.

This sequence belongs to the peptidase S1 family.

Functionally, protease that shows preferential cleavage after Arg and Lys residues. The sequence is that of Trypsin-like protease from Streptomyces glaucescens.